We begin with the raw amino-acid sequence, 231 residues long: ATP phosphoribosyltransferase (231 aa).

It belongs to the ATP phosphoribosyltransferase family. Short subfamily. In terms of assembly, heteromultimer composed of HisG and HisZ subunits.

It localises to the cytoplasm. It carries out the reaction 1-(5-phospho-beta-D-ribosyl)-ATP + diphosphate = 5-phospho-alpha-D-ribose 1-diphosphate + ATP. It functions in the pathway amino-acid biosynthesis; L-histidine biosynthesis; L-histidine from 5-phospho-alpha-D-ribose 1-diphosphate: step 1/9. In terms of biological role, catalyzes the condensation of ATP and 5-phosphoribose 1-diphosphate to form N'-(5'-phosphoribosyl)-ATP (PR-ATP). Has a crucial role in the pathway because the rate of histidine biosynthesis seems to be controlled primarily by regulation of HisG enzymatic activity. The polypeptide is ATP phosphoribosyltransferase (Brucella ovis (strain ATCC 25840 / 63/290 / NCTC 10512)).